The following is a 244-amino-acid chain: Ribosomal RNA small subunit methyltransferase G (244 aa).

Residues glycine 79, phenylalanine 84, aspartate 102–threonine 104, alanine 130–glutamate 131, and arginine 149 contribute to the S-adenosyl-L-methionine site. The segment at aspartate 225–lysine 244 is disordered. Positions proline 234–lysine 244 are enriched in polar residues.

Belongs to the methyltransferase superfamily. RNA methyltransferase RsmG family.

The protein resides in the cytoplasm. Its function is as follows. Specifically methylates the N7 position of a guanine in 16S rRNA. The protein is Ribosomal RNA small subunit methyltransferase G of Deinococcus deserti (strain DSM 17065 / CIP 109153 / LMG 22923 / VCD115).